The sequence spans 220 residues: Peptide methionine sulfoxide reductase MsrA (220 aa).

C54 is a catalytic residue.

The protein belongs to the MsrA Met sulfoxide reductase family.

It carries out the reaction L-methionyl-[protein] + [thioredoxin]-disulfide + H2O = L-methionyl-(S)-S-oxide-[protein] + [thioredoxin]-dithiol. It catalyses the reaction [thioredoxin]-disulfide + L-methionine + H2O = L-methionine (S)-S-oxide + [thioredoxin]-dithiol. Has an important function as a repair enzyme for proteins that have been inactivated by oxidation. Catalyzes the reversible oxidation-reduction of methionine sulfoxide in proteins to methionine. The sequence is that of Peptide methionine sulfoxide reductase MsrA from Salinispora tropica (strain ATCC BAA-916 / DSM 44818 / JCM 13857 / NBRC 105044 / CNB-440).